A 320-amino-acid chain; its full sequence is Olfactory receptor 51E2 (320 aa).

The Extracellular segment spans residues 1–27 (MSSCNFTHATFLLIGIPGLEEAHFWFG). Asn5 carries an N-linked (GlcNAc...) asparagine glycan. The chain crosses the membrane as a helical span at residues 28 to 48 (FPLLSMYAVALFGNCIVVFIV). Residues 49–53 (RTERS) lie on the Cytoplasmic side of the membrane. Residues 54 to 74 (LHAPMYLFLCMLAAIDLALST) form a helical membrane-spanning segment. The Extracellular portion of the chain corresponds to 75-98 (STMPKILALFWFDSREITFDACLA). An intrachain disulfide couples Cys96 to Cys178. A helical transmembrane segment spans residues 99 to 119 (QMFFIHTLSAIESTILLAMAF). The Cytoplasmic segment spans residues 120-141 (DRYVAICHPLRHAAVLNNTVTV). The helical transmembrane segment at 142 to 162 (QIGMVALVRGSLFFFPLPLLI) threads the bilayer. The Extracellular segment spans residues 163-200 (KRLAFCHSNVLSHSYCVHQDVMKLAYTDTLPNVVYGLT). Residues 201–221 (AILLVMGVDVMFISLSYFLII) traverse the membrane as a helical segment. Residues 222 to 239 (RTVLQLPSKSERAKAFGT) are Cytoplasmic-facing. A helical membrane pass occupies residues 240-260 (CVSHISVVLAFYVPLIGLSVV). Residues 261-269 (HRFGNSLDP) lie on the Extracellular side of the membrane. Residues 270–290 (IVHVLMGDVYLLLPPVINPII) traverse the membrane as a helical segment. The Cytoplasmic portion of the chain corresponds to 291–320 (YGAKTKQIRTRVLAMFKISCDKDIEAGGNT).

It belongs to the G-protein coupled receptor 1 family. In terms of tissue distribution, in brain, expressed in medulla oblongata by cells close to the fourth ventricle, in the area postrema, the nucleus tractus solitarius. Expressed in olfactory epithelium and vomeronasal organ. Expressed in kidney by large renal vessels, renal afferent arterioles, and extrarenal vascular beds. In small resistance vessels the expression is restricted to cells of the juxtaglomerular afferent arteriole, which mediate renin secretion. Also detected in small blood vessels in a variety of tissues including heart, diaphragm, skeletal muscle, and skin. In the heart, esophagus, and stomach it is detected in axons of autonomic neurons and neurons of the enteric plexus. Also detected in colon and liver. Expressed in the glomus cells of the carotid body.

Its subcellular location is the cell membrane. The protein resides in the early endosome membrane. Its function is as follows. Olfactory receptor. The activity of this receptor is probably mediated by G-proteins which induce elevation of intracellular Ca(2+), cAMP and activation of phosphorylation of the protein kinases PKA and MAPK3/MAPK1. Activation of OR51E2 may affect melanocyte proliferation, differentiation, and melanogenesis and may increase proliferation and migration of primary retinal pigment epithelial (RPE) cells. Activated by the short chain fatty acids (SCFA), acetate and propionate. In response to SCFA, may positively regulate renin secretion and increase blood pressure. May also be activated by steroid hormones and regulate cell proliferation. Activated by L-lactate in glomus cells. In Mus musculus (Mouse), this protein is Olfactory receptor 51E2 (Or51e2).